A 294-amino-acid polypeptide reads, in one-letter code: Negative regulator of the PHO system (294 aa).

One can recognise a Protein kinase domain in the interval 7 to 289; that stretch reads FQQLEKLGEG…ARQSLEHPWF (283 aa). Residues 13–21 and K36 each bind ATP; that span reads LGEGTYATV. Catalysis depends on D130, which acts as the Proton acceptor.

The protein belongs to the protein kinase superfamily. CMGC Ser/Thr protein kinase family. CDC2/CDKX subfamily. As to quaternary structure, interacts with a number of cyclins.

The catalysed reaction is L-seryl-[protein] + ATP = O-phospho-L-seryl-[protein] + ADP + H(+). It carries out the reaction L-threonyl-[protein] + ATP = O-phospho-L-threonyl-[protein] + ADP + H(+). Functionally, when phosphate concentrations are high it phosphorylates the PHO4 transcription factor thus establishing repression. The polypeptide is Negative regulator of the PHO system (PHO85) (Yarrowia lipolytica (strain CLIB 122 / E 150) (Yeast)).